The primary structure comprises 310 residues: NADH-cytochrome b5 reductase 1 (310 aa).

The helical transmembrane segment at 30–50 (WVPFAVALAAGFVAWKLSVGG) threads the bilayer. The FAD-binding FR-type domain occupies 61 to 166 (NEFQNFVLKE…RGPKGAMVYT (106 aa)). Residues 146–160 (TTLK…RGPK) and 172–209 (HIGM…QVDL) each bind FAD.

The protein belongs to the flavoprotein pyridine nucleotide cytochrome reductase family. Monomer. Component of the 2-(3-amino-3-carboxypropyl)histidine synthase complex composed of dph1, dph2, dph3 and a NADH-dependent reductase, predominantly cbr1. The cofactor is FAD.

It is found in the mitochondrion outer membrane. The enzyme catalyses 2 Fe(III)-[cytochrome b5] + NADH = 2 Fe(II)-[cytochrome b5] + NAD(+) + H(+). It carries out the reaction 2 Fe(3+)-[Dph3] + NADH = 2 Fe(2+)-[Dph3] + NAD(+) + H(+). Its pathway is protein modification; peptidyl-diphthamide biosynthesis. Functionally, NADH-dependent reductase for dph3 and cytochrome b5. Required for the first step of diphthamide biosynthesis, a post-translational modification of histidine which occurs in elongation factor 2. Dph1 and dph2 transfer a 3-amino-3-carboxypropyl (ACP) group from S-adenosyl-L-methionine (SAM) to a histidine residue, the reaction is assisted by a reduction system comprising dph3 and a NADH-dependent reductase, predominantly cbr1. By reducing dph3, also involved in the formation of the tRNA wobble base modification mcm5s 2U (5-methoxycarbonylmethyl-2-thiouridine), mediated by the elongator complex. The cytochrome b5/NADH cytochrome b5 reductase electron transfer system supports the catalytic activity of several sterol biosynthetic enzymes. The protein is NADH-cytochrome b5 reductase 1 (cbr1) of Emericella nidulans (strain FGSC A4 / ATCC 38163 / CBS 112.46 / NRRL 194 / M139) (Aspergillus nidulans).